A 490-amino-acid polypeptide reads, in one-letter code: MAERAARHCCLGWDFSTQQVKVVAVDAELSVFYEDSVHFDRDLVEFGTQGGVHVHKDGLTVTSPVLMWVQALDIILEKMKASGFDFSQVLALSGAGQQHGSVYWKTGASQVLTSLSPDLPLREQLQACFSISNCPVWMDSSTAAQCRQLEAAVGGAQALSLLTGSRAYERFTGNQIAKIYQQNPEAYSHTERISLVSSFAASLFLGSYSPVDYSDGSGMNLLQIQDKVWSQACLGACAPRLEEKLGRPVPSCSIVGAISSYFVQRYGFPPECKVVAFTGDNPASLAGMRLEEGDIAVSLGTSDTLFLWLQEPTPALEGHIFCNPVDPQHYMALLCFKNGSLMREKIRDESASGSWSKFSKALQSTGMGNSGNLGFYFDVMEITPEIIGRHRFTAENHEVSAFPQDVEIRALIEGQFMAKKIHAEALGYRVMPKTKILATGGASHNRDILQVLADVFGAPVYVIDTANSACVGSAYRAFHGPSLLCLVSIY.

4 residues coordinate substrate: H99, R170, D280, and N281. ATP contacts are provided by residues W355, 441–442 (GA), and N445.

This sequence belongs to the FGGY kinase family. In terms of assembly, monomer.

The catalysed reaction is D-xylulose + ATP = D-xylulose 5-phosphate + ADP + H(+). Phosphorylates D-xylulose to produce D-xylulose 5-phosphate, a molecule that may play an important role in the regulation of glucose metabolism and lipogenesis. The polypeptide is Xylulose kinase (XYLB) (Bos taurus (Bovine)).